A 582-amino-acid polypeptide reads, in one-letter code: Membrane protein insertase YidC (582 aa).

The helical transmembrane segment at isoleucine 3–tryptophan 23 threads the bilayer. The segment at glutamine 38–glutamate 92 is disordered. The segment covering serine 45–serine 58 has biased composition (low complexity). Positions glutamine 59 to proline 74 are enriched in polar residues. 5 helical membrane passes run threonine 357–leucine 377, glycine 394–phenylalanine 414, leucine 464–leucine 484, phenylalanine 495–methionine 515, and methionine 541–leucine 561.

This sequence belongs to the OXA1/ALB3/YidC family. Type 1 subfamily. Interacts with the Sec translocase complex via SecD. Specifically interacts with transmembrane segments of nascent integral membrane proteins during membrane integration.

It is found in the cell inner membrane. Functionally, required for the insertion and/or proper folding and/or complex formation of integral membrane proteins into the membrane. Involved in integration of membrane proteins that insert both dependently and independently of the Sec translocase complex, as well as at least some lipoproteins. Aids folding of multispanning membrane proteins. The polypeptide is Membrane protein insertase YidC (Alcanivorax borkumensis (strain ATCC 700651 / DSM 11573 / NCIMB 13689 / SK2)).